The primary structure comprises 514 residues: ATP synthase subunit alpha (514 aa).

Residue 170-177 (GDRQIGKT) participates in ATP binding.

Belongs to the ATPase alpha/beta chains family. F-type ATPases have 2 components, CF(1) - the catalytic core - and CF(0) - the membrane proton channel. CF(1) has five subunits: alpha(3), beta(3), gamma(1), delta(1), epsilon(1). CF(0) has three main subunits: a(1), b(2) and c(9-12). The alpha and beta chains form an alternating ring which encloses part of the gamma chain. CF(1) is attached to CF(0) by a central stalk formed by the gamma and epsilon chains, while a peripheral stalk is formed by the delta and b chains.

Its subcellular location is the cell inner membrane. It catalyses the reaction ATP + H2O + 4 H(+)(in) = ADP + phosphate + 5 H(+)(out). Its function is as follows. Produces ATP from ADP in the presence of a proton gradient across the membrane. The alpha chain is a regulatory subunit. In Pseudomonas syringae pv. tomato (strain ATCC BAA-871 / DC3000), this protein is ATP synthase subunit alpha.